A 174-amino-acid polypeptide reads, in one-letter code: Translation initiation factor IF-3 (174 aa).

It belongs to the IF-3 family. In terms of assembly, monomer.

The protein resides in the cytoplasm. In terms of biological role, IF-3 binds to the 30S ribosomal subunit and shifts the equilibrium between 70S ribosomes and their 50S and 30S subunits in favor of the free subunits, thus enhancing the availability of 30S subunits on which protein synthesis initiation begins. The chain is Translation initiation factor IF-3 from Azorhizobium caulinodans (strain ATCC 43989 / DSM 5975 / JCM 20966 / LMG 6465 / NBRC 14845 / NCIMB 13405 / ORS 571).